Reading from the N-terminus, the 264-residue chain is 3-methyl-2-oxobutanoate hydroxymethyltransferase (264 aa).

Mg(2+) is bound by residues Asp45 and Asp84. 3-methyl-2-oxobutanoate contacts are provided by residues 45–46, Asp84, and Lys112; that span reads DS. Glu114 is a Mg(2+) binding site. Residue Glu181 is the Proton acceptor of the active site.

This sequence belongs to the PanB family. As to quaternary structure, homodecamer; pentamer of dimers. Requires Mg(2+) as cofactor.

Its subcellular location is the cytoplasm. The catalysed reaction is 3-methyl-2-oxobutanoate + (6R)-5,10-methylene-5,6,7,8-tetrahydrofolate + H2O = 2-dehydropantoate + (6S)-5,6,7,8-tetrahydrofolate. The protein operates within cofactor biosynthesis; (R)-pantothenate biosynthesis; (R)-pantoate from 3-methyl-2-oxobutanoate: step 1/2. Catalyzes the reversible reaction in which hydroxymethyl group from 5,10-methylenetetrahydrofolate is transferred onto alpha-ketoisovalerate to form ketopantoate. This chain is 3-methyl-2-oxobutanoate hydroxymethyltransferase, found in Photobacterium profundum (strain SS9).